Here is a 580-residue protein sequence, read N- to C-terminus: Type 3 secretion system translocon protein SctE (580 aa).

2 consecutive transmembrane segments (helical) span residues 313–333 (ILGALLTIVSVVAAAFSGGAS) and 399–419 (IGSILGAIAGALVLVAAVVLV).

The protein belongs to the SctE/SipB/YopB family. As to quaternary structure, the core secretion machinery of the T3SS is composed of approximately 20 different proteins, including cytoplasmic components, a base, an export apparatus and a needle. This subunit is involved in the formation of a pore, called the translocon, in host membrane.

It localises to the secreted. The protein resides in the host membrane. In terms of biological role, component of the type III secretion system (T3SS), also called injectisome, which is used to inject bacterial effector proteins into eukaryotic host cells. IpaB/SctE and IpaC/SctB are inserted into the host membrane where they form a pore and allow the translocation of effector proteins into the cytosol of target cells. This Shigella dysenteriae protein is Type 3 secretion system translocon protein SctE.